We begin with the raw amino-acid sequence, 727 residues long: Tubulin polyglutamylase TTLL11 (727 aa).

The span at 1 to 12 (MRRSSPEKKPEA) shows a compositional bias: basic and acidic residues. Positions 1-88 (MRRSSPEKKP…ARVVRRLPPA (88 aa)) are disordered. Residues 17 to 34 (DAAAAAAATAAATESLPA) show a composition bias toward low complexity. 2 stretches are compositionally biased toward basic and acidic residues: residues 49–63 (DPER…KDVG) and 72–81 (HAPEEGEARV). Residues 125 to 477 (PVTVDSSKAR…EVKVAVIRDT (353 aa)) form the TTL domain. Residues Lys-246, 252-253 (QG), 279-282 (QEYI), and 292-294 (KFD) each bind ATP. Gln-252 contacts a protein. Arg-318 provides a ligand contact to L-glutamate. 340-341 (TN) contributes to the ATP binding site. Residues Tyr-342, Ser-343, and Lys-362 each coordinate L-glutamate. Mg(2+) is bound by residues Asp-425, Glu-438, and Asn-440. Residues 464 to 566 (LVDEEVKVAV…SICLKQVFPK (103 aa)) form a c-MTBD region region. Lys-470 provides a ligand contact to L-glutamate. 2 disordered regions span residues 530–551 (KSFT…EPNP) and 694–727 (RPLQ…LSQS).

Belongs to the tubulin--tyrosine ligase family. Requires Mg(2+) as cofactor. As to expression, highly expressed in brain, kidney, liver, lung, muscle and testis. Expressed in heart, spleen and trachea. In the brain, expressed in ependymal cilia, cortex, corpus callosum and striatum.

The protein resides in the cytoplasm. It localises to the cytoskeleton. It is found in the cilium basal body. It carries out the reaction L-glutamyl-[protein] + L-glutamate + ATP = gamma-L-glutamyl-L-glutamyl-[protein] + ADP + phosphate + H(+). It catalyses the reaction (L-glutamyl)(n)-gamma-L-glutamyl-L-glutamyl-[protein] + L-glutamate + ATP = (L-glutamyl)(n+1)-gamma-L-glutamyl-L-glutamyl-[protein] + ADP + phosphate + H(+). In terms of biological role, polyglutamylase which modifies tubulin, generating polyglutamate side chains of variable lengths on the gamma-carboxyl group of specific glutamate residues within the C-terminal tail of tubulin. Preferentially mediates ATP-dependent polyglutamate long side-chain elongation over the initiation step of the polyglutamylation reaction. Preferentially modifies the alpha-tubulin tail over a beta-tail. Required for CCSAP localization to both spindle and cilia microtubules. Promotes tubulin polyglutamylation which stimulates spastin/SPAST-mediated microtubule severing, thereby regulating microtubule functions. This is Tubulin polyglutamylase TTLL11 from Mus musculus (Mouse).